The following is a 482-amino-acid chain: Glycogen synthase (482 aa).

Lys-21 is an ADP-alpha-D-glucose binding site.

Belongs to the glycosyltransferase 1 family. Bacterial/plant glycogen synthase subfamily.

It catalyses the reaction [(1-&gt;4)-alpha-D-glucosyl](n) + ADP-alpha-D-glucose = [(1-&gt;4)-alpha-D-glucosyl](n+1) + ADP + H(+). It functions in the pathway glycan biosynthesis; glycogen biosynthesis. In terms of biological role, synthesizes alpha-1,4-glucan chains using ADP-glucose. The sequence is that of Glycogen synthase from Clostridium perfringens (strain 13 / Type A).